The chain runs to 134 residues: DNA-binding protein inhibitor ID-2 (134 aa).

The tract at residues 1–24 is disordered; it reads MKAFSPVRSVRKNSLSDHGLGISR. Phosphoserine is present on residues serine 14 and serine 25. Residues 23 to 75 form the bHLH domain; the sequence is SRSKTPVDDPMSLLYNMNDCYSKLKELVPSIPQNKKVSKMEILQHVIDYILDL. The Nuclear export signal motif lies at 106 to 115; it reads LNTDISILSL.

In terms of assembly, interacts with GATA4 and NKX2-5. Interacts with NR0B2. Interacts with CLOCK and BMAL1. Interacts with IFI204. Interacts with NEDD9/HEF1. Interacts with ASB4; this interaction promotes ID2 proteasomal degradation. In terms of processing, ubiquitinated in a ASB4-depedent manner, leading to proteasomal degradation. Phosphorylated in vitro by CDK1, PKA and PKC.

It localises to the cytoplasm. The protein resides in the nucleus. Its function is as follows. Transcriptional regulator (lacking a basic DNA binding domain) which negatively regulates the basic helix-loop-helix (bHLH) transcription factors by forming heterodimers and inhibiting their DNA binding and transcriptional activity. Implicated in regulating a variety of cellular processes, including cellular growth, senescence, differentiation, apoptosis, angiogenesis, and neoplastic transformation. Inhibits skeletal muscle and cardiac myocyte differentiation. Regulates the circadian clock by repressing the transcriptional activator activity of the CLOCK-BMAL1 heterodimer. Restricts the CLOCK and BMAL1 localization to the cytoplasm. Plays a role in both the input and output pathways of the circadian clock: in the input component, is involved in modulating the magnitude of photic entrainment and in the output component, contributes to the regulation of a variety of liver clock-controlled genes involved in lipid metabolism. This chain is DNA-binding protein inhibitor ID-2 (ID2), found in Bos taurus (Bovine).